The following is a 238-amino-acid chain: Probable septum site-determining protein MinC (238 aa).

It belongs to the MinC family. As to quaternary structure, interacts with MinD and FtsZ.

Functionally, cell division inhibitor that blocks the formation of polar Z ring septums. Rapidly oscillates between the poles of the cell to destabilize FtsZ filaments that have formed before they mature into polar Z rings. Prevents FtsZ polymerization. This is Probable septum site-determining protein MinC from Xylella fastidiosa (strain M23).